The following is a 799-amino-acid chain: Cadherin-8 (799 aa).

The N-terminal stretch at 1–29 (MPERLAETLMDLWTPLIILWITLPSCVYT) is a signal peptide. The propeptide occupies 30–61 (APMNQAHVLTTGSPLELSRQSEDMRILSRSKR). Cadherin domains follow at residues 62–167 (GWVW…APEF), 168–276 (LNGP…PPKF), 277–391 (AQSL…PPVF), 392–494 (SSPT…DNAP), and 495–616 (EFAS…YVLP). Over 62–621 (GWVWNQMFVL…AYVLPIGLSM (560 aa)) the chain is Extracellular. N-linked (GlcNAc...) asparagine glycosylation occurs at N188. Residues N463, N473, and N544 are each glycosylated (N-linked (GlcNAc...) asparagine). A helical membrane pass occupies residues 622-642 (GALIAILACIILLLVIVVLFV). Over 643–799 (TLRRHKNEPL…YSVGESDKET (157 aa)) the chain is Cytoplasmic. At S795 the chain carries Phosphoserine.

Its subcellular location is the cell membrane. Cadherins are calcium-dependent cell adhesion proteins. They preferentially interact with themselves in a homophilic manner in connecting cells; cadherins may thus contribute to the sorting of heterogeneous cell types. This is Cadherin-8 (Cdh8) from Mus musculus (Mouse).